The chain runs to 150 residues: Macrodomain Ter protein (150 aa).

The protein belongs to the MatP family. As to quaternary structure, homodimer.

Its subcellular location is the cytoplasm. Required for spatial organization of the terminus region of the chromosome (Ter macrodomain) during the cell cycle. Prevents early segregation of duplicated Ter macrodomains during cell division. Binds specifically to matS, which is a 13 bp signature motif repeated within the Ter macrodomain. The polypeptide is Macrodomain Ter protein (Klebsiella pneumoniae (strain 342)).